The chain runs to 548 residues: Elongator complex protein 3 (548 aa).

Residues 83–373 (RTASGIAVVA…YRVQRDIPMP (291 aa)) form the Radical SAM core domain. [4Fe-4S] cluster is bound by residues C100, C110, and C113. Residues K165, 475 to 478 (ELHV), 498 to 500 (FGM), and Y531 contribute to the acetyl-CoA site. In terms of domain architecture, N-acetyltransferase spans 397 to 548 (TECRDVRTRE…EGPYMVKNLY (152 aa)).

The protein belongs to the ELP3 family. As to quaternary structure, component of the elongator complex. [4Fe-4S] cluster is required as a cofactor.

It is found in the cytoplasm. The protein localises to the nucleus. The enzyme catalyses uridine(34) in tRNA + acetyl-CoA + S-adenosyl-L-methionine + H2O = 5-(carboxymethyl)uridine(34) in tRNA + 5'-deoxyadenosine + L-methionine + CoA + 2 H(+). It participates in tRNA modification; 5-methoxycarbonylmethyl-2-thiouridine-tRNA biosynthesis. Its function is as follows. Catalytic tRNA acetyltransferase subunit of the elongator complex which is required for multiple tRNA modifications, including mcm5U (5-methoxycarbonylmethyl uridine), mcm5s2U (5-methoxycarbonylmethyl-2-thiouridine), and ncm5U (5-carbamoylmethyl uridine). In the elongator complex, acts as a tRNA uridine(34) acetyltransferase by mediating formation of carboxymethyluridine in the wobble base at position 34 in tRNAs. Involved in neurogenesis. Involved in somite development. The polypeptide is Elongator complex protein 3 (Danio rerio (Zebrafish)).